The chain runs to 312 residues: Glyoxylate/hydroxypyruvate reductase A (312 aa).

R227 is an active-site residue. The active-site Proton donor is H275.

The protein belongs to the D-isomer specific 2-hydroxyacid dehydrogenase family. GhrA subfamily.

The protein resides in the cytoplasm. It catalyses the reaction glycolate + NADP(+) = glyoxylate + NADPH + H(+). The catalysed reaction is (R)-glycerate + NAD(+) = 3-hydroxypyruvate + NADH + H(+). The enzyme catalyses (R)-glycerate + NADP(+) = 3-hydroxypyruvate + NADPH + H(+). Catalyzes the NADPH-dependent reduction of glyoxylate and hydroxypyruvate into glycolate and glycerate, respectively. The polypeptide is Glyoxylate/hydroxypyruvate reductase A (Salmonella dublin (strain CT_02021853)).